The chain runs to 479 residues: Proline--tRNA ligase (479 aa).

The protein belongs to the class-II aminoacyl-tRNA synthetase family. ProS type 3 subfamily. As to quaternary structure, homodimer.

It localises to the cytoplasm. The catalysed reaction is tRNA(Pro) + L-proline + ATP = L-prolyl-tRNA(Pro) + AMP + diphosphate. Catalyzes the attachment of proline to tRNA(Pro) in a two-step reaction: proline is first activated by ATP to form Pro-AMP and then transferred to the acceptor end of tRNA(Pro). The polypeptide is Proline--tRNA ligase (Agathobacter rectalis (strain ATCC 33656 / DSM 3377 / JCM 17463 / KCTC 5835 / VPI 0990) (Eubacterium rectale)).